A 118-amino-acid chain; its full sequence is Holo-[acyl-carrier-protein] synthase (118 aa).

Mg(2+) is bound by residues D9 and E52.

This sequence belongs to the P-Pant transferase superfamily. AcpS family. Mg(2+) serves as cofactor.

Its subcellular location is the cytoplasm. The enzyme catalyses apo-[ACP] + CoA = holo-[ACP] + adenosine 3',5'-bisphosphate + H(+). Transfers the 4'-phosphopantetheine moiety from coenzyme A to a Ser of acyl-carrier-protein. In Frankia alni (strain DSM 45986 / CECT 9034 / ACN14a), this protein is Holo-[acyl-carrier-protein] synthase.